A 108-amino-acid polypeptide reads, in one-letter code: UPF0145 protein MADE_1007770 (108 aa).

Belongs to the UPF0145 family.

This Alteromonas mediterranea (strain DSM 17117 / CIP 110805 / LMG 28347 / Deep ecotype) protein is UPF0145 protein MADE_1007770.